The chain runs to 722 residues: Dynein axonemal intermediate chain 7 (722 aa).

Residues 1–15 are compositionally biased toward basic residues; that stretch reads MGPKAKKSGSKKKKV. Residues 1 to 20 form a disordered region; that stretch reads MGPKAKKSGSKKKKVTKAER.

The protein belongs to the DNAI7 family. Part of the multisubunit axonemal dynein complex formed at least of two heavy chains and a number of intermediate and light chains. Associates with tubulin. Interacts with microtubule. Ubiquitinated. Ubiquitination leads to its degradation through the 26S proteasome. Ubiquitin-proteasome-mediated DNAI7 degradation occurs in mitosis.

Its subcellular location is the cell projection. The protein resides in the cilium. It localises to the cytoplasm. Functionally, via its association with the multisubunit axonemal dynein complex, is potentially involved in the regulation of cilia function. May act as a cell cycle regulator. The chain is Dynein axonemal intermediate chain 7 from Macaca fascicularis (Crab-eating macaque).